We begin with the raw amino-acid sequence, 299 residues long: F-actin-capping protein subunit alpha-3 (299 aa).

S2 and S290 each carry phosphoserine.

Belongs to the F-actin-capping protein alpha subunit family. As to quaternary structure, component of the F-actin capping complex, composed of a heterodimer of an alpha and a beta subunit. Component of the WASH complex, composed of F-actin-capping protein subunit alpha (CAPZA1, CAPZA2 or CAPZA3), F-actin-capping protein subunit beta (CAPZB), WASHC1, WASHC2, WASHC3, WASHC4 and WASHC5. As to expression, exclusively expressed in the testis.

It localises to the cytoplasm. The protein localises to the cytoskeleton. In terms of biological role, F-actin-capping proteins bind in a Ca(2+)-independent manner to the fast growing ends of actin filaments (barbed end) thereby blocking the exchange of subunits at these ends. Unlike other capping proteins (such as gelsolin and severin), these proteins do not sever actin filaments. May play a role in the morphogenesis of spermatid. This Rattus norvegicus (Rat) protein is F-actin-capping protein subunit alpha-3 (Capza3).